Reading from the N-terminus, the 1413-residue chain is DNA-directed RNA polymerase subunit beta' (1413 aa).

Zn(2+) is bound by residues cysteine 70, cysteine 72, cysteine 85, and cysteine 88. Positions 460, 462, and 464 each coordinate Mg(2+). Residues cysteine 819, cysteine 893, cysteine 900, and cysteine 903 each contribute to the Zn(2+) site. The disordered stretch occupies residues 1392 to 1413 (EEAFDFGTPSAPAEEPQHPAAE).

This sequence belongs to the RNA polymerase beta' chain family. In terms of assembly, the RNAP catalytic core consists of 2 alpha, 1 beta, 1 beta' and 1 omega subunit. When a sigma factor is associated with the core the holoenzyme is formed, which can initiate transcription. Requires Mg(2+) as cofactor. It depends on Zn(2+) as a cofactor.

The catalysed reaction is RNA(n) + a ribonucleoside 5'-triphosphate = RNA(n+1) + diphosphate. Functionally, DNA-dependent RNA polymerase catalyzes the transcription of DNA into RNA using the four ribonucleoside triphosphates as substrates. The protein is DNA-directed RNA polymerase subunit beta' of Burkholderia cenocepacia (strain ATCC BAA-245 / DSM 16553 / LMG 16656 / NCTC 13227 / J2315 / CF5610) (Burkholderia cepacia (strain J2315)).